Reading from the N-terminus, the 588-residue chain is Adenine deaminase (588 aa).

It belongs to the metallo-dependent hydrolases superfamily. Adenine deaminase family. As to quaternary structure, homodimer. Requires Mn(2+) as cofactor.

The enzyme catalyses adenine + H2O + H(+) = hypoxanthine + NH4(+). This is Adenine deaminase from Shigella flexneri.